A 695-amino-acid chain; its full sequence is Parasporal crystal protein Cry18Ca (695 aa).

It belongs to the delta endotoxin family.

Binds to the brush border membrane vesicles of scarab larvae and damages the gut wall somehow to allow the vegetative cells of P.popilliae to enter the hemolymph. This chain is Parasporal crystal protein Cry18Ca (cry18Ca), found in Paenibacillus popilliae (Bacillus popilliae).